The chain runs to 388 residues: Dual-specificity RNA methyltransferase RlmN (388 aa).

Residue E109 is the Proton acceptor of the active site. Residues 115–354 (EEDRATLCVS…TIVRKTRGDD (240 aa)) enclose the Radical SAM core domain. C122 and C359 are joined by a disulfide. [4Fe-4S] cluster contacts are provided by C129, C133, and C136. Residues 183-184 (GE), S215, 237-239 (SLH), and N316 contribute to the S-adenosyl-L-methionine site. The active-site S-methylcysteine intermediate is C359.

This sequence belongs to the radical SAM superfamily. RlmN family. Requires [4Fe-4S] cluster as cofactor.

The protein resides in the cytoplasm. The enzyme catalyses adenosine(2503) in 23S rRNA + 2 reduced [2Fe-2S]-[ferredoxin] + 2 S-adenosyl-L-methionine = 2-methyladenosine(2503) in 23S rRNA + 5'-deoxyadenosine + L-methionine + 2 oxidized [2Fe-2S]-[ferredoxin] + S-adenosyl-L-homocysteine. It carries out the reaction adenosine(37) in tRNA + 2 reduced [2Fe-2S]-[ferredoxin] + 2 S-adenosyl-L-methionine = 2-methyladenosine(37) in tRNA + 5'-deoxyadenosine + L-methionine + 2 oxidized [2Fe-2S]-[ferredoxin] + S-adenosyl-L-homocysteine. In terms of biological role, specifically methylates position 2 of adenine 2503 in 23S rRNA and position 2 of adenine 37 in tRNAs. m2A2503 modification seems to play a crucial role in the proofreading step occurring at the peptidyl transferase center and thus would serve to optimize ribosomal fidelity. This is Dual-specificity RNA methyltransferase RlmN from Enterobacter sp. (strain 638).